The primary structure comprises 360 residues: G-protein coupled receptor 15 (360 aa).

Topologically, residues methionine 1–serine 33 are extracellular. A helical transmembrane segment spans residues valine 34–leucine 54. Over methionine 55 to aspartate 69 the chain is Cytoplasmic. Residues isoleucine 70 to valine 90 form a helical membrane-spanning segment. The Extracellular segment spans residues aspartate 91 to serine 120. The helical transmembrane segment at valine 121–serine 141 threads the bilayer. Residues arginine 142–cysteine 149 are Cytoplasmic-facing. Residues alanine 150–leucine 170 form a helical membrane-spanning segment. Over serine 171–lysine 192 the chain is Extracellular. The helical transmembrane segment at leucine 193–threonine 213 threads the bilayer. Residues cysteine 214–serine 239 are Cytoplasmic-facing. The helical transmembrane segment at isoleucine 240–serine 260 threads the bilayer. Residues lysine 261 to methionine 284 are Extracellular-facing. The chain crosses the membrane as a helical span at residues glutamate 285–phenylalanine 305. Residues aspartate 306–leucine 360 lie on the Cytoplasmic side of the membrane. Serine 359 is modified (phosphoserine).

This sequence belongs to the G-protein coupled receptor 1 family. Interacts with adapter YWHAE; this interaction promotes ER-to-Golgi transport of GPR15. Phosphorylation is necessary for YWHAE binding and efficient surface expression. Post-translationally, O-glycosylated. Sialylated O-glycans in the N-terminal tail inhibits binding of GPR15LG. In terms of processing, sulfation is required for efficient binding of GPR15LG.

It localises to the cell membrane. In terms of biological role, g protein-coupled receptor that plays an important role in immune homeostasis. Acts via its natural ligand GPR15LG, a chemokine-like polypeptide strongly expressed in gastrointestinal tissues. GPR15-GPR15LG signaling axis regulates intestinal homeostasis and inflammation through the migration of immune cells. Controls thereby the specific homing of T-cells, particularly FOXP3+ regulatory T-cells (Tregs), to the large intestine lamina propria. Also required for skin localization of thymus-derived dendritic epidermal T-cells. Plays an important role in mediating cytoprotective function as well as angiogenesis of thrombomodulin. Mechanistically, preferentially signals through the Gi/o pathway to inhibit adenylate cyclase activity and activate a phosphatidylinositol-calcium second messenger system that regulates the release of Ca(2+) ions from intracellular stores. This is G-protein coupled receptor 15 (GPR15) from Chlorocebus aethiops (Green monkey).